The sequence spans 626 residues: Division abnormally delayed protein (626 aa).

Residues 1 to 26 form the signal peptide; sequence MAARSVRLAQLLLFTLLCGFVGLSAA. Residues 41–52 are compositionally biased toward basic residues; that stretch reads LHSATTHHRRRL. The tract at residues 41–65 is disordered; sequence LHSATTHHRRRLQRDSRAKDAVGGS. Asn97 is a glycosylation site (N-linked (GlcNAc...) asparagine; atypical). Asn101, Asn150, and Asn187 each carry an N-linked (GlcNAc...) asparagine glycan. The segment at 533–607 is disordered; sequence NSIQATHDIQ…GKTSGSNPLE (75 aa). Ser549, Ser569, Ser573, and Ser601 each carry an O-linked (Xyl...) (heparan sulfate) serine glycan. A compositionally biased stretch (gly residues) spans 565 to 575; that stretch reads GAHGSGDGSGD. Gly602 is lipidated: GPI-anchor amidated glycine. Residues 603 to 626 constitute a propeptide, removed in mature form; that stretch reads SNPLEGTATWMLLTLVTMLFSSCS.

This sequence belongs to the glypican family. As to quaternary structure, interacts with nord; the interaction promotes dally degradation. Interacts with Magu. As part of the dally/ Magu complex, associates with fwe (isoforms ubi, LoseA and LoseB) and is unable to interact with fwe independently of Magu.

Its subcellular location is the cell membrane. Cell surface proteoglycan that bears heparan sulfate. Functions as a coreceptor for growth factors and morphogens, such as the products of dpp, to regulate signaling and distribution of these ligands. Required for cell division patterning during postembryonic development of the nervous system. Plays a role in dpp/BMP signaling possibly by stabilizing dpp and thereby creating a morphological gradient during wing development. Might have a role in testis development. Functions with magu and fwe in a mechanism of scaling, which utilises apoptosis to ensure that the dpp patterning gradient remains proportional to the size of the growing wing. In this mechanism, fwe represses dally and Magu-dependent activity in expanding the gradient, and dally/Magu inhibits fwe-dependent apoptosis to keep cell death rate low. When the levels of these different proteins are optimally regulated the gradient correctly scales with organ growth but when this fails, fwe-mediated apoptosis is activated to trim the developing tissue to match the correct size of the gradient. This chain is Division abnormally delayed protein (dally), found in Drosophila melanogaster (Fruit fly).